The primary structure comprises 60 residues: Mastoparan-V (60 aa).

Residues 1–27 form the signal peptide; that stretch reads MKNTILILFTAFIALLGFFGMSAEALA. 4 AXPX repeats span residues 27–30, 31–34, 35–38, and 41–44; these read ADPV, ADPL, AGPN, and ADPE. A propeptide spanning residues 28 to 45 is cleaved from the precursor; sequence DPVADPLAGPNAEADPEA. Leu59 carries the post-translational modification Leucine amide.

This sequence belongs to the MCD family. Mastoparan subfamily. As to expression, expressed by the venom gland.

It is found in the secreted. The protein localises to the target cell membrane. Functionally, antimicrobial and mast cell degranulating peptide. Has broad spectrum antibacterial activity against both Gram-positive and Gram-negative bacteria (S.aureus MIC=32-64 ug/ml, S.xylosus MIC=3 ug/ml, S.alactolyticus MIC=16 ug/ml, C.koseri MIC=4 ug/ml, E.coli MIC=8 ug/ml, K.pneumoniae MIC=64 ug/ml, P.aerugiosa MIC=256 ug/ml, S.choleraesuis MIC=32 ug/ml, S.typhimurium MIC=32 ug/ml, V.parahamelytics MIC=32 ug/ml). Affects membrane permeability of E.coli. Shows hemolytic activities on sheep, chicken and human erythrocytes. Its mast cell degranulation activity may be related to the activation of G-protein coupled receptors in mast cells as well as interaction with other proteins located in cell endosomal membranes in the mast cells. This chain is Mastoparan-V, found in Vespa velutina flavitarsus (Asian hornet).